A 215-amino-acid polypeptide reads, in one-letter code: [PSI+] inducibility protein 3 (215 aa).

At S2 the chain carries N-acetylserine. A phosphoserine mark is found at S52 and S55. Positions A54–S113 constitute an SH3 domain. K80 participates in a covalent cross-link: Glycyl lysine isopeptide (Lys-Gly) (interchain with G-Cter in ubiquitin). Residues G114–S189 form a disordered region. Positions P124 to Y127 match the PY motif motif.

The protein belongs to the LSB1 family. Interacts with LAS17, RSP5 and SUP35. Post-translationally, ubiquitinated by RSP5. Ubiquitination reduces the protein abundance and its prion-inducing ability.

Its subcellular location is the cytoplasm. The protein resides in the nucleus. The protein localises to the cytoskeleton. It localises to the actin patch. Functionally, overproduction promotes the de novo induction of the [PSI+] prion form of SUP35. The prion-inducing effect depends on the association with the actin cytoskeleton. Also implicated in prion maintenance during heat stress. The sequence is that of [PSI+] inducibility protein 3 (PIN3) from Saccharomyces cerevisiae (strain ATCC 204508 / S288c) (Baker's yeast).